The chain runs to 312 residues: Secreted RxLR effector protein 14 (312 aa).

The first 20 residues, Met-1 to Ala-20, serve as a signal peptide directing secretion. A RxLR-dEER motif is present at residues Arg-46 to Arg-61.

The protein belongs to the RxLR effector family.

It is found in the secreted. The protein localises to the host nucleus. In terms of biological role, secreted effector that completely suppresses the host cell death induced by cell death-inducing proteins. The protein is Secreted RxLR effector protein 14 of Plasmopara viticola (Downy mildew of grapevine).